We begin with the raw amino-acid sequence, 539 residues long: 3-hydroxy-3-methylglutaryl-coenzyme A reductase 1 (539 aa).

Residues 63-83 (FATVVCQLASVVYLLSLFAHP) traverse the membrane as a helical segment. The interval 84 to 124 (DAPATTTGDDDDGQGGSRRARPAAAEPAPMHGHGGGMMEAD) is linker. A disordered region spans residues 87 to 116 (ATTTGDDDDGQGGSRRARPAAAEPAPMHGH). The span at 105–114 (PAAAEPAPMH) shows a compositional bias: low complexity. Residues 125 to 539 (DEEIVAAVAS…SSKDVAKAAS (415 aa)) are catalytic. The active-site Charge relay system is the Glu218. A glycan (N-linked (GlcNAc...) asparagine) is linked at Asn282. Residues Lys350 and Asp426 each act as charge relay system in the active site. A helical transmembrane segment spans residues 496–516 (LATIVAGSVLAGELSLLAALA). His524 (proton donor) is an active-site residue. An N-linked (GlcNAc...) asparagine glycan is attached at Asn528.

Belongs to the HMG-CoA reductase family.

The protein localises to the endoplasmic reticulum membrane. The catalysed reaction is (R)-mevalonate + 2 NADP(+) + CoA = (3S)-3-hydroxy-3-methylglutaryl-CoA + 2 NADPH + 2 H(+). Its pathway is metabolic intermediate biosynthesis; (R)-mevalonate biosynthesis; (R)-mevalonate from acetyl-CoA: step 3/3. Its function is as follows. Catalyzes the synthesis of mevalonate. The specific precursor of all isoprenoid compounds present in plants. The sequence is that of 3-hydroxy-3-methylglutaryl-coenzyme A reductase 1 (HMG1) from Oryza sativa subsp. indica (Rice).